The following is a 174-amino-acid chain: Calcineurin subunit B (174 aa).

EF-hand domains are found at residues 21-56 (EEIERIRKRFIKIDANQSGSIDRNEFLSIPSVASNP), 60-88 (RLFSVVDEDGGGDVDFQEFINSLSVFSVH), 90-125 (NKEEKLKFAFKIYDIDRDGYISNGELYLVLKMMVGT), and 131-166 (QLQQIVDKTIMEVDKDRDGKISFEEFKDIVSGSNVT). Positions 34, 36, 38, 40, 45, 66, 68, 72, 77, 103, 105, 107, 109, 114, 144, 146, 148, 150, and 155 each coordinate Ca(2+).

It belongs to the calcineurin regulatory subunit family. As to quaternary structure, composed of a catalytic subunit (A) and a regulatory subunit (B).

Regulatory subunit of calcineurin, a calcium-dependent, calmodulin stimulated protein phosphatase. Confers calcium sensitivity. This Schizosaccharomyces pombe (strain 972 / ATCC 24843) (Fission yeast) protein is Calcineurin subunit B (cnb1).